The sequence spans 154 residues: Endoribonuclease YbeY (154 aa).

Residues His-117, His-121, and His-127 each coordinate Zn(2+).

Belongs to the endoribonuclease YbeY family. It depends on Zn(2+) as a cofactor.

It localises to the cytoplasm. Functionally, single strand-specific metallo-endoribonuclease involved in late-stage 70S ribosome quality control and in maturation of the 3' terminus of the 16S rRNA. This is Endoribonuclease YbeY from Aromatoleum aromaticum (strain DSM 19018 / LMG 30748 / EbN1) (Azoarcus sp. (strain EbN1)).